We begin with the raw amino-acid sequence, 958 residues long: MTDIAESTAHPRDGVPPSQQTTASVASAALATATASASPTTGSATSTAAPGKRSRSSSTGSAKGSIGGKKATRACDQCRKRKIKCDYDNDKNVCSSCNRNGDRCQFNRVQLKRGPSKGFNRNNSTSSAAGASTTSSTHQTFNANASGNTNSSNNNNHNNNNNNSVLLPPITQYFQGNEQNHDQQFWKVPVDLAGHLSPHHSQSHLHRDSVDSATSNNSNLNINGINIVDNSTTNSQSGGYFPVSACRSRASSVPSFPRKPPMQIQPPMTSMYASSLGGGTPATGAIGASNTAVSGATVPGTSSKRRKSVVSSNESPRTSRASLLPRPDFAVVNLVPVPQNVVTPASSLPAVPSGPLPSTGVGVGGSTGQVRLTDLDLINTYYEFVHLNFPVIPINKKALTSDILVINTSIEELNDLVIVWFRNSLELLVTVSLEQPQTQSTHAYTESLNSCFQNVVNLYPRLKQNNGIDPKVKIVYLCTFLILIYVLFFLGQHNSFIISVSVTIFNNFGLYGKLLSLNTSSPDSSSPYDIIFVRLYLLLVTFDSSYSMALGTPKLLNLEINGLVDKFFNLKSQNEHLFIDENLIKVNCILKNLELGEYICNASHMKDSSDAMKVIKSTYMSKKHQSKKADHSSSVSPMFISEWFQKFLVDKKNLISLLLDYQLRINDITPLQLSKLYVDLTNSLCALITVILEILKLMMKLNPTNSIDYNYRPLQHFDIDKPPSGGGGSSSTNTSSNPYSNPNSNEFYQKLLGLSSDRNTNLADMTRGCITPFAIITINELFNVTELIKNIPSSLISVVMESTKEEKENTINPQDLVLKLSNSMNEIVQITSLLTMVKPYKGIDSSYPRWQKFSKRSGPIPSMAPSNTATSTIQDFSEYNMTRSPSLGSSAYSNNPHSQHSDHNFNETNDYNDNISIFKKIYYENNNIQNNTTPQNEVLQSYIDTAWRLLDDSELGWL.

The disordered stretch occupies residues 1–73 (MTDIAESTAH…GSIGGKKATR (73 aa)). Residues 21–64 (TTASVASAALATATASASPTTGSATSTAAPGKRSRSSSTGSAKG) show a composition bias toward low complexity. Positions 75 to 104 (CDQCRKRKIKCDYDNDKNVCSSCNRNGDRC) form a DNA-binding region, zn(2)-C6 fungal-type. 5 disordered regions span residues 113-165 (RGPS…NNSV), 197-218 (SPHHSQSHLHRDSVDSATSNNS), 291-322 (TAVSGATVPGTSSKRRKSVVSSNESPRTSRAS), 720-740 (DKPPSGGGGSSSTNTSSNPYS), and 884-908 (SPSLGSSAYSNNPHSQHSDHNFNET). Residues 124–164 (STSSAAGASTTSSTHQTFNANASGNTNSSNNNNHNNNNNNS) are compositionally biased toward low complexity. A compositionally biased stretch (low complexity) spans 730-740 (SSTNTSSNPYS). The segment covering 884–898 (SPSLGSSAYSNNPHS) has biased composition (polar residues).

It belongs to the EDS1/RGT1 family.

It localises to the nucleus. The protein localises to the cytoplasm. Its function is as follows. Glucose-responsive transcription factor that regulates expression of several glucose transporter (HXT) genes in response to glucose. In the absence of glucose, it functions as a transcriptional repressor, whereas high concentrations of glucose cause it to function as a transcriptional activator. In cells growing on low levels of glucose, has a neutral role, neither repressing nor activating transcription. The protein is Glucose transport transcription regulator RGT1 (RGT1) of Vanderwaltozyma polyspora (strain ATCC 22028 / DSM 70294 / BCRC 21397 / CBS 2163 / NBRC 10782 / NRRL Y-8283 / UCD 57-17) (Kluyveromyces polysporus).